Here is a 467-residue protein sequence, read N- to C-terminus: L-histidine transporter HutT (467 aa).

13 helical membrane-spanning segments follow: residues 18-38 (FMALGSAIGTGLFYGSASAIQ), 39-59 (MAGPAVLLAYLIGGAAVFMVM), 71-91 (VAGSFGHYATTYLGPMAGFIL), 99-119 (MVIVAIADVTAFGIYMGFWFP), 125-145 (IWVLGIVFLIGGLNLCNVKVF), 155-175 (LKVGAIVAMILAGLGIMAFGF), 200-220 (VGGLIASFAVVMFAFGGIEII), 245-265 (ILLFYVLTLFVLMCLYPWPQI), 280-300 (GIGSAAAVLNVVVISAAISAI), 334-354 (WMTVVVMGAALLIGVLLNYLI), 358-378 (VFLLIASIATFATVWVWLMIL), 402-422 (FWPYGPAMAIAFMVFIFGVLG), and 429-449 (AALIVGVIWVVFLVASYLLWC).

Belongs to the amino acid-polyamine-organocation (APC) superfamily. Amino acid transporter (AAT) (TC 2.A.3.1) family.

It is found in the cell inner membrane. It carries out the reaction L-histidine(out) + n H(+)(out) = L-histidine(in) + n H(+)(in). With respect to regulation, transport activity is inhibited by the proton ionophores carbonyl cyanide m-chlorophenyl hydrazine (CCCP) and 2,4-dinitrophenol (DNP), but not by valinomycin, nigericin and nonactin. Uptake is reduced in the presence of the sulfhydryl reagent N-ethylmaleimide (NEM). Uptake is not affected by arginine, lysine, proline or compounds structurally related to histidine such as imidazole, 3-amino-1,2,4-triazole and urocanate. Only 1,2,4-triazolyl-3-alanine reduces the rate of L-histidine uptake significantly. Major high-affinity histidine transporter. Binds and catalyzes the uptake of histidine into the cell. Functions as an histidine:proton symporter with high specificity for histidine. The protein is L-histidine transporter HutT of Pseudomonas putida (strain ATCC 47054 / DSM 6125 / CFBP 8728 / NCIMB 11950 / KT2440).